An 807-amino-acid polypeptide reads, in one-letter code: Protein WEAK CHLOROPLAST MOVEMENT UNDER BLUE LIGHT 1 (807 aa).

Residues 1–162 form a disordered region; the sequence is MEDLKTVEAS…GTPKNVDSHR (162 aa). Residues 31–40 are compositionally biased toward polar residues; sequence RESNIQSATK. Low complexity predominate over residues 46-73; the sequence is QSQTDTEETQQSQTDTEETQQSQTDDTT. Positions 138 to 157 are enriched in polar residues; sequence RTVSSPRFSGSPVSTGTPKN. Serine 148 carries the post-translational modification Phosphoserine. Coiled coils occupy residues 191-429, 457-489, 516-621, and 664-724; these read RMQA…ELVA, DLHAAVASAKKELEEVNVNIEKAAAEVSCLKLA, IAVA…ALEE, and AAVS…WRAE. Disordered stretches follow at residues 532–565 and 722–789; these read IASVQSKEKDAREKMVELPKQLQQAAEEADEAKS and RAEH…KKKK. 3 stretches are compositionally biased toward basic and acidic residues: residues 537 to 548, 722 to 732, and 739 to 749; these read SKEKDAREKMVE, RAEHEQKRKAG, and KNLKESFEGGK. Positions 761-781 are enriched in polar residues; sequence SSPSESYGTEENSETNLSPQT.

This sequence belongs to the WEB family. In terms of assembly, interacts with PMI2. In terms of tissue distribution, ubiquitous but preferentially in chloroplast-containing tissues.

Its subcellular location is the cytoplasm. Functionally, required for the chloroplast avoidance response under high intensity blue light. This avoidance response consists in the relocation of chloroplasts on the anticlinal side of exposed cells. Acts in association with PMI2 to maintain the velocity of chloroplast photorelocation movement via cp-actin filaments regulation. The protein is Protein WEAK CHLOROPLAST MOVEMENT UNDER BLUE LIGHT 1 (WEB1) of Arabidopsis thaliana (Mouse-ear cress).